The primary structure comprises 217 residues: KH domain-containing protein 3 (217 aa).

The segment at 1 to 40 (MDAPRRFPTLVQLMQPKAMPVEVLGHLPKRFSWFHSEFLK) is involved in RNA binding. The region spanning 40-103 (KNPKVVRLEV…SYQEDTIKMI (64 aa)) is the KH; atypical domain. Positions 129–217 (QKAETQRSSI…EDARDPVTRL (89 aa)) are disordered. Residues 138-155 (IEVREAGTQRSVEVREAG) are compositionally biased toward basic and acidic residues. Residues Thr145 and Thr156 each carry the phosphothreonine; by ATM modification. 2 stretches are compositionally biased toward polar residues: residues 156–170 (TQRSVEVQEVGTQGS) and 177–194 (AGTQQSLQAANKSGTQRS). Ser182 is subject to Phosphoserine. Residues 205–217 (RFREDARDPVTRL) are compositionally biased toward basic and acidic residues.

The protein belongs to the KHDC1 family. Component of the subcortical maternal complex (SCMC), at least composed of NLRP5, KHDC3L, OOEP, and TLE6 isoform 1. Within the complex, interacts with NLRP5, KHDC3L and TLE6 isoform 1. The SCMC may facilitate translocation of its components between the nuclear and cytoplasmic compartments. Forms a scaffold complex with OOEP/FLOPED, and interacts with BLM and TRIM25 at DNA replication forks. Interacts with PARP1; the interaction is increased following the formation of DNA double-strand breaks. Interacts with NUMA1. As to expression, expression appears to be maximal in germinal vesicle oocytes, it tails off through metaphase II oocytes and is undetectable following the completion of the oocyte to embryo transition.

The protein resides in the cytoplasm. The protein localises to the cell cortex. It localises to the nucleus. Its subcellular location is the mitochondrion. It is found in the cytoskeleton. The protein resides in the microtubule organizing center. The protein localises to the centrosome. It localises to the chromosome. Functionally, component of the subcortical maternal complex (SCMC), a multiprotein complex that plays a key role in early embryonic development. The SCMC complex is a structural constituent of cytoplasmic lattices, which consist in fibrous structures found in the cytoplasm of oocytes and preimplantation embryos. They are required to store maternal proteins critical for embryonic development, such as proteins that control epigenetic reprogramming of the preimplantation embryo, and prevent their degradation or activation. KHDC3 ensures proper spindle assembly by regulating the localization of AURKA via RHOA signaling and of PLK1 via a RHOA-independent process. Required for the localization of MAD2L1 to kinetochores to enable spindle assembly checkpoint function. As part of the OOEP-KHDC3 scaffold, recruits BLM and TRIM25 to DNA replication forks, thereby promoting the ubiquitination of BLM by TRIM25, enhancing BLM retainment at replication forks and therefore promoting stalled replication fork restart. Regulates homologous recombination-mediated DNA repair via recruitment of RAD51 to sites of DNA double-strand breaks, and sustainment of PARP1 activity, which in turn modulates downstream ATM or ATR activation. Activation of ATM or ATR in response to DNA double-strand breaks may be cell-type specific. Its role in DNA double-strand break repair is independent of its role in restarting stalled replication forks. Promotes neural stem cell neurogenesis and neuronal differentiation in the hippocampus. May regulate normal development of learning, memory and anxiety. Capable of binding RNA. The protein is KH domain-containing protein 3 of Homo sapiens (Human).